A 416-amino-acid polypeptide reads, in one-letter code: Coenzyme F420H(2) oxidase (416 aa).

Fe cation is bound by residues His-87, Glu-89, Asp-91, His-92, His-155, Asp-174, and His-239. The Flavodoxin-like domain occupies Ala-266–Ala-407. FMN is bound by residues Thr-272–Thr-277, Thr-324–Asp-327, and Ser-359–Gly-364.

The protein in the N-terminal section; belongs to the zinc metallo-hydrolase group 3 family. The cofactor is FMN. Requires Fe cation as cofactor.

The catalysed reaction is 2 reduced coenzyme F420-(gamma-L-Glu)(n) + O2 = 2 oxidized coenzyme F420-(gamma-L-Glu)(n) + 2 H2O + 2 H(+). Functionally, catalyzes the oxidation of F420H(2) with O(2). May be involved in O(2) detoxification, reducing the intracellular O(2) concentration to a level allowing growth at the expense of methane formation. The sequence is that of Coenzyme F420H(2) oxidase (fprA) from Methanocaldococcus jannaschii (strain ATCC 43067 / DSM 2661 / JAL-1 / JCM 10045 / NBRC 100440) (Methanococcus jannaschii).